A 102-amino-acid chain; its full sequence is uncharacterized protein (102 aa).

This is an uncharacterized protein from Homo sapiens (Human).